A 23-amino-acid polypeptide reads, in one-letter code: Paralytic peptide 2 (23 aa).

A disulfide bond links Cys-7 and Cys-19.

This sequence belongs to the GBP/PSP1/paralytic peptide family. In terms of tissue distribution, hemolymph.

In terms of biological role, causes rapid, rigid paralysis when injected into Lepidopteran larvae. The physiological role may be to reduce hemolymph loss following injury and promote wound healing. The sequence is that of Paralytic peptide 2 from Manduca sexta (Tobacco hawkmoth).